The primary structure comprises 31 residues: Potassium channel toxin alpha-KTx 5.4 (31 aa).

Cystine bridges form between cysteine 3/cysteine 21, cysteine 8/cysteine 26, and cysteine 12/cysteine 28. Residues arginine 6 to glutamate 9 are [R/K]XCQ motif. Residue tyrosine 31 is modified to Tyrosine amide.

Belongs to the short scorpion toxin superfamily. Potassium channel inhibitor family. Alpha-KTx 05 subfamily. As to expression, expressed by the venom gland.

Its subcellular location is the secreted. In terms of biological role, blocks small conductance calcium-activated potassium channels. Shows activity on KCa2.2/KCNN2 (IC(50)=0.0243 nM), KCa2.3/KCNN3 (IC(50)=1.7 nM), and KCa2.1/KCNN1 (IC(50)=42 nM). Induces cell death when tested on human T lymphoblastic leukemia Jurkat E6.1 and human breast cancer MDA-MB-231 cell lines which constituvely express KCa2.2/KCNN2, but not on human peripheral blood lymphocytes (which do not express KCa2.2/KCNN2). The sequence is that of Potassium channel toxin alpha-KTx 5.4 from Hottentotta tamulus (Eastern Indian scorpion).